The sequence spans 491 residues: Protein nucleotidyltransferase YdiU (491 aa).

ATP-binding residues include G88, G90, R91, K111, D123, G124, R174, and R181. The active-site Proton acceptor is D250. Mg(2+)-binding residues include N251 and D260. D260 is a binding site for ATP. The span at 466 to 484 (DDQPDRADYAEPPQPEERV) shows a compositional bias: basic and acidic residues. The segment at 466–491 (DDQPDRADYAEPPQPEERVLQTFCGT) is disordered.

This sequence belongs to the SELO family. It depends on Mg(2+) as a cofactor. Requires Mn(2+) as cofactor.

The enzyme catalyses L-seryl-[protein] + ATP = 3-O-(5'-adenylyl)-L-seryl-[protein] + diphosphate. It carries out the reaction L-threonyl-[protein] + ATP = 3-O-(5'-adenylyl)-L-threonyl-[protein] + diphosphate. It catalyses the reaction L-tyrosyl-[protein] + ATP = O-(5'-adenylyl)-L-tyrosyl-[protein] + diphosphate. The catalysed reaction is L-histidyl-[protein] + UTP = N(tele)-(5'-uridylyl)-L-histidyl-[protein] + diphosphate. The enzyme catalyses L-seryl-[protein] + UTP = O-(5'-uridylyl)-L-seryl-[protein] + diphosphate. It carries out the reaction L-tyrosyl-[protein] + UTP = O-(5'-uridylyl)-L-tyrosyl-[protein] + diphosphate. Functionally, nucleotidyltransferase involved in the post-translational modification of proteins. It can catalyze the addition of adenosine monophosphate (AMP) or uridine monophosphate (UMP) to a protein, resulting in modifications known as AMPylation and UMPylation. This is Protein nucleotidyltransferase YdiU from Bradyrhizobium sp. (strain ORS 278).